The following is a 590-amino-acid chain: G protein-coupled receptor kinase 5 (590 aa).

The N-terminal stretch occupies residues 1-185 (MELENIVANT…LERQPVTKNT (185 aa)). Positions 20–39 (GGKRKGKSKKWKEILKFPHI) are interaction with calmodulin. The RGS domain maps to 53–171 (YCSLCDKQPV…LDSMYFDRFL (119 aa)). In terms of domain architecture, Protein kinase spans 186-448 (FRQYRVLGKG…AAEVKRHPFF (263 aa)). Residues 192–200 (LGKGGFGEV) and Lys215 contribute to the ATP site. Asp311 acts as the Proton acceptor in catalysis. The Nuclear localization signal signature appears at 388-395 (RKEKVKRE). An AGC-kinase C-terminal domain is found at 449 to 514 (RNMNFKRLEA…GSVPIPWQSE (66 aa)). Ser484 carries the phosphoserine; by autocatalysis modification. Phosphothreonine; by autocatalysis is present on Thr485. The sufficient for membrane localization stretch occupies residues 546–565 (PKKGLLQRLFKRQHQNNSKS). Residues 554–590 (LFKRQHQNNSKSSPNSKTSFNHHINSNHVSSNSTGSS) are disordered. Residues 561–590 (NNSKSSPNSKTSFNHHINSNHVSSNSTGSS) show a composition bias toward low complexity. Ser579 carries the phosphoserine modification.

The protein belongs to the protein kinase superfamily. AGC Ser/Thr protein kinase family. GPRK subfamily. As to quaternary structure, interacts with ST13 (via the C-terminus 303-319 AA). Interacts with TP53/p53. Interacts with HTR4 (via C-terminus 330-346 AA); this interaction is promoted by 5-HT (serotonin). Interacts with HDAC5. Interacts with GIT1. Post-translationally, autophosphorylated. Autophosphorylation may play a critical role in the regulation of GRK5 kinase activity. In terms of tissue distribution, highest levels in lung, heart, retina, lingual epithelium. Very little in brain, liver, kidney.

The protein resides in the cytoplasm. The protein localises to the nucleus. It localises to the cell membrane. It catalyses the reaction [G-protein-coupled receptor] + ATP = [G-protein-coupled receptor]-phosphate + ADP + H(+). With respect to regulation, inhibited by calmodulin with an IC(50) of 50 nM. Calmodulin inhibits GRK5 association with receptor and phospholipid. In terms of biological role, serine/threonine kinase that phosphorylates preferentially the activated forms of a variety of G-protein-coupled receptors (GPCRs). Such receptor phosphorylation initiates beta-arrestin-mediated receptor desensitization, internalization, and signaling events leading to their down-regulation. Phosphorylates a variety of GPCRs, including adrenergic receptors (Beta-2 adrenergic receptor), muscarinic acetylcholine receptors (more specifically Gi-coupled M2/M4 subtypes), dopamine receptors and opioid receptors. In addition to GPCRs, also phosphorylates various substrates: Hsc70-interacting protein/ST13, TP53/p53, HDAC5, and arrestin-1/ARRB1. Phosphorylation of ARRB1 by GRK5 inhibits G-protein independent MAPK1/MAPK3 signaling downstream of 5HT4-receptors. Phosphorylation of HDAC5, a repressor of myocyte enhancer factor 2 (MEF2) leading to nuclear export of HDAC5 and allowing MEF2-mediated transcription. Phosphorylation of TP53/p53, a crucial tumor suppressor, inhibits TP53/p53-mediated apoptosis. Phosphorylation of ST13 regulates internalization of the chemokine receptor. Phosphorylates rhodopsin (RHO) (in vitro) and a non G-protein-coupled receptor, LRP6 during Wnt signaling (in vitro). The chain is G protein-coupled receptor kinase 5 (GRK5) from Bos taurus (Bovine).